Reading from the N-terminus, the 216-residue chain is Phosphatidylserine decarboxylase proenzyme (216 aa).

The active-site Schiff-base intermediate with substrate; via pyruvic acid is Ser-185. Pyruvic acid (Ser); by autocatalysis is present on Ser-185.

The protein belongs to the phosphatidylserine decarboxylase family. PSD-A subfamily. As to quaternary structure, heterodimer of a large membrane-associated beta subunit and a small pyruvoyl-containing alpha subunit. It depends on pyruvate as a cofactor. Post-translationally, is synthesized initially as an inactive proenzyme. Formation of the active enzyme involves a self-maturation process in which the active site pyruvoyl group is generated from an internal serine residue via an autocatalytic post-translational modification. Two non-identical subunits are generated from the proenzyme in this reaction, and the pyruvate is formed at the N-terminus of the alpha chain, which is derived from the carboxyl end of the proenzyme. The post-translation cleavage follows an unusual pathway, termed non-hydrolytic serinolysis, in which the side chain hydroxyl group of the serine supplies its oxygen atom to form the C-terminus of the beta chain, while the remainder of the serine residue undergoes an oxidative deamination to produce ammonia and the pyruvoyl prosthetic group on the alpha chain.

The protein resides in the cell membrane. The catalysed reaction is a 1,2-diacyl-sn-glycero-3-phospho-L-serine + H(+) = a 1,2-diacyl-sn-glycero-3-phosphoethanolamine + CO2. It participates in phospholipid metabolism; phosphatidylethanolamine biosynthesis; phosphatidylethanolamine from CDP-diacylglycerol: step 2/2. In terms of biological role, catalyzes the formation of phosphatidylethanolamine (PtdEtn) from phosphatidylserine (PtdSer). The polypeptide is Phosphatidylserine decarboxylase proenzyme (Nitrosomonas eutropha (strain DSM 101675 / C91 / Nm57)).